The chain runs to 153 residues: MAVKIKLTRLGKIRNPQYRIVVADSRTRRNGRAIETIGKYHPKEEPSLIEVDSERAQYWLGVGAQPTEPVEAILKITGDWQKFKGLPGAEGTLRVKEAKPTKLELFQAALAQAENEPVGEAITPKKKKAKAEDAEAAADAPAEAAAESEAADK.

Residues 114–153 are disordered; the sequence is ENEPVGEAITPKKKKAKAEDAEAAADAPAEAAAESEAADK. Residues 137-153 are compositionally biased toward low complexity; that stretch reads AADAPAEAAAESEAADK.

Belongs to the bacterial ribosomal protein bS16 family.

This Rhodococcus opacus (strain B4) protein is Small ribosomal subunit protein bS16.